The chain runs to 820 residues: Protein O-mannosyl-transferase 2 (820 aa).

The helical transmembrane segment at 124–144 threads the bilayer; the sequence is AAGWWATLAVVTLLSFATRFH. N168 is a glycosylation site (N-linked (GlcNAc...) asparagine). The next 5 helical transmembrane spans lie at 170-190, 216-236, 261-281, 301-321, and 353-373; these read TFFF…AGYL, GFCA…VLDL, QYIL…LSMV, LTGI…FIIV, and ILCL…VHVM. N376 and N400 each carry an N-linked (GlcNAc...) asparagine glycan. MIR domains are found at residues 404 to 460, 473 to 529, and 534 to 591; these read PEHL…IKKY, VEFV…IEVV, and GNRI…IEEH. N515 is a glycosylation site (N-linked (GlcNAc...) asparagine). N598 and N653 each carry an N-linked (GlcNAc...) asparagine glycan. Helical transmembrane passes span 659-679, 713-733, 735-755, and 774-794; these read VYLL…VLYL, LLLG…ILYF, HYFP…DTLL, and VGIL…HPLA.

This sequence belongs to the glycosyltransferase 39 family. N-glycosylated. Ubiquitous. Highly expressed in the acrosome of cap phase spermatids, in spermatocytes and liver. Isoform 1 seems to be testis-specific.

The protein localises to the endoplasmic reticulum membrane. The enzyme catalyses a di-trans,poly-cis-dolichyl beta-D-mannosyl phosphate + L-seryl-[protein] = 3-O-(alpha-D-mannosyl)-L-seryl-[protein] + a di-trans,poly-cis-dolichyl phosphate + H(+). It carries out the reaction a di-trans,poly-cis-dolichyl beta-D-mannosyl phosphate + L-threonyl-[protein] = 3-O-(alpha-D-mannosyl)-L-threonyl-[protein] + a di-trans,poly-cis-dolichyl phosphate + H(+). The protein operates within protein modification; protein glycosylation. In terms of biological role, transfers mannosyl residues to the hydroxyl group of serine or threonine residues. Coexpression of both POMT1 and POMT2 is necessary for enzyme activity, expression of either POMT1 or POMT2 alone is insufficient. Essentially dedicated to O-mannosylation of alpha-DAG1 and few other proteins but not of cadherins and protocaherins. This chain is Protein O-mannosyl-transferase 2 (Pomt2), found in Mus musculus (Mouse).